The following is a 300-amino-acid chain: MDAVSGGSATGTGEQVNNLRICRAEYRSISRFVEQLRPTRQCMKTLQTHFTHLPASTLLSIFSQEYQKRMKRSMARHHSPEVLRVYYQRYRDEAETRATEPLLLELANQVDLSPALLARLMLECFLEERNASVPSRQVLNNMLREPYLIPDLVLAKHIEQCTVNDCCYGPLVDCIKHAIGLEHEDTLRDKLRERNLSFLDENQLRVKGYDKTPDIILEVPIAVDGHIVHWIESKASFGDDHSHNTYLNEQFWSYCNRFGPGLVIYWFGFISELDCQRERGILLKDGFPTDISSLCAGPQR.

The protein resides in the nucleus. Its subcellular location is the cytoplasm. In terms of biological role, may play a role in erythroid cell differentiation. This is CDAN1-interacting nuclease 1 (cdin1) from Danio rerio (Zebrafish).